A 504-amino-acid polypeptide reads, in one-letter code: Taurochenodeoxycholic 6 alpha-hydroxylase (504 aa).

Helical transmembrane passes span 6 to 26 (LASV…LLLL) and 110 to 130 (APVL…LLNG). Cys-451 contacts heme.

The protein belongs to the cytochrome P450 family. It depends on heme as a cofactor. In terms of tissue distribution, primarily expressed in liver. Low expression in kidney.

The protein localises to the endoplasmic reticulum membrane. It carries out the reaction taurochenodeoxycholate + reduced [NADPH--hemoprotein reductase] + O2 = taurohyocholate + oxidized [NADPH--hemoprotein reductase] + H2O + H(+). It catalyses the reaction lithocholate + reduced [NADPH--hemoprotein reductase] + O2 = hyodeoxycholate + oxidized [NADPH--hemoprotein reductase] + H2O + H(+). In terms of biological role, catalyzes the 6 alpha hydroxylation oxidation of taurodeoxycholate to produce the pig specific bile acid taurohyocholic acid. The chain is Taurochenodeoxycholic 6 alpha-hydroxylase (CYP4A21) from Sus scrofa (Pig).